A 286-amino-acid polypeptide reads, in one-letter code: Shikimate dehydrogenase (NADP(+)) (286 aa).

Residues 21-23 and T68 contribute to the shikimate site; that span reads TLS. K72 acts as the Proton acceptor in catalysis. E84 lines the NADP(+) pocket. The shikimate site is built by N93 and D108. NADP(+) is bound by residues 132–136 and L230; that span reads GNGGA. Y232 provides a ligand contact to shikimate. G253 serves as a coordination point for NADP(+).

It belongs to the shikimate dehydrogenase family. As to quaternary structure, homodimer.

The catalysed reaction is shikimate + NADP(+) = 3-dehydroshikimate + NADPH + H(+). Its pathway is metabolic intermediate biosynthesis; chorismate biosynthesis; chorismate from D-erythrose 4-phosphate and phosphoenolpyruvate: step 4/7. Involved in the biosynthesis of the chorismate, which leads to the biosynthesis of aromatic amino acids. Catalyzes the reversible NADPH linked reduction of 3-dehydroshikimate (DHSA) to yield shikimate (SA). This chain is Shikimate dehydrogenase (NADP(+)), found in Microcystis aeruginosa (strain NIES-843 / IAM M-2473).